The chain runs to 370 residues: Ferrochelatase (370 aa).

His210 and Glu291 together coordinate Fe cation.

This sequence belongs to the ferrochelatase family.

It is found in the cytoplasm. It catalyses the reaction heme b + 2 H(+) = protoporphyrin IX + Fe(2+). It participates in porphyrin-containing compound metabolism; protoheme biosynthesis; protoheme from protoporphyrin-IX: step 1/1. Catalyzes the ferrous insertion into protoporphyrin IX. This chain is Ferrochelatase, found in Marinobacter nauticus (strain ATCC 700491 / DSM 11845 / VT8) (Marinobacter aquaeolei).